The following is a 285-amino-acid chain: UPF0703 protein YcgQ (285 aa).

4 helical membrane-spanning segments follow: residues 4–24 (LLVLMGFTFFFYHLHASGNLT), 34–54 (LSFIAIFLLAILTAVQAYLFI), 89–109 (LIYVVFLFPLVSGIFFPIATL), and 210–230 (FVLRFGIIHCIADSGVYGMLV).

Belongs to the UPF0703 family.

The protein localises to the cell membrane. In Bacillus subtilis (strain 168), this protein is UPF0703 protein YcgQ (ycgQ).